We begin with the raw amino-acid sequence, 131 residues long: Small ribosomal subunit protein uS8 (131 aa).

The protein belongs to the universal ribosomal protein uS8 family. Part of the 30S ribosomal subunit. Contacts proteins S5 and S12.

Functionally, one of the primary rRNA binding proteins, it binds directly to 16S rRNA central domain where it helps coordinate assembly of the platform of the 30S subunit. The polypeptide is Small ribosomal subunit protein uS8 (Bordetella petrii (strain ATCC BAA-461 / DSM 12804 / CCUG 43448)).